The following is a 305-amino-acid chain: Serine/threonine-protein kinase 16 (305 aa).

Residue glycine 2 is the site of N-myristoyl glycine attachment. Residues cysteine 6 and cysteine 8 are each lipidated (S-palmitoyl cysteine). In terms of domain architecture, Protein kinase spans 20–293; that stretch reads YLFVQKLGEG…PVLLSQLEAL (274 aa). Residues 26-34 and lysine 49 contribute to the ATP site; that span reads LGEGGFSYV. Aspartate 148 (proton acceptor) is an active-site residue. An activation loop region spans residues 166-202; the sequence is DLGSMNQACIQVEGSRQALALQDWAAQRCTISYRAPE. Position 197 is a phosphoserine; by autocatalysis (serine 197). The residue at position 198 (tyrosine 198) is a Phosphotyrosine; by autocatalysis.

It belongs to the protein kinase superfamily. Ser/Thr protein kinase family. As to quaternary structure, monomer. Interacts with DRG1 (via its N-terminal); the interaction phosphorylates DRG1. In terms of processing, mainly autophosphorylated on serine/threonine residues. Also autophosphorylated on Tyr-198. In terms of tissue distribution, ubiquitously expressed at low levels. Relatively higher levels in testis, kidney and liver.

The protein resides in the cytoplasm. It is found in the perinuclear region. It localises to the membrane. It carries out the reaction L-seryl-[protein] + ATP = O-phospho-L-seryl-[protein] + ADP + H(+). The catalysed reaction is L-threonyl-[protein] + ATP = O-phospho-L-threonyl-[protein] + ADP + H(+). The enzyme catalyses L-tyrosyl-[protein] + ATP = O-phospho-L-tyrosyl-[protein] + ADP + H(+). Its function is as follows. Membrane-associated protein kinase that phosphorylates on serine and threonine residues. In vitro substrates include DRG1, ENO1 and EIF4EBP1. Also autophosphorylates. May be involved in secretory vesicle trafficking or intracellular signaling. May have a role in regulating stromal-epithelial interactions that occur during ductal morphogenesis in the mammary gland. May be involved in TGF-beta signaling. Able to autophosphorylate on Tyr residue; it is however unclear whether it has tyrosine-protein kinase toward other proteins. In Mus musculus (Mouse), this protein is Serine/threonine-protein kinase 16 (Stk16).